The primary structure comprises 463 residues: Methionine aminopeptidase 2-1 (463 aa).

Over residues 1–12 (MGSKTPDGHRQG) the composition is skewed to basic and acidic residues. Residues 1 to 96 (MGSKTPDGHR…SGQQTTPPRV (96 aa)) are disordered. Residues 41 to 53 (SGEDDEDGDDDEE) are compositionally biased toward acidic residues. A compositionally biased stretch (polar residues) spans 58–67 (DLNSRAQPNN). Basic residues predominate over residues 70–85 (KKRKRKNNKKKKKKRP). Substrate is bound at residue histidine 215. Aspartate 236, aspartate 247, and histidine 316 together coordinate a divalent metal cation. Residue histidine 324 participates in substrate binding. A divalent metal cation contacts are provided by glutamate 349 and glutamate 444.

This sequence belongs to the peptidase M24A family. Methionine aminopeptidase eukaryotic type 2 subfamily. Co(2+) serves as cofactor. Zn(2+) is required as a cofactor. Requires Mn(2+) as cofactor. The cofactor is Fe(2+).

The protein localises to the cytoplasm. The catalysed reaction is Release of N-terminal amino acids, preferentially methionine, from peptides and arylamides.. Functionally, cotranslationally removes the N-terminal methionine from nascent proteins. The N-terminal methionine is often cleaved when the second residue in the primary sequence is small and uncharged (Met-Ala-, Cys, Gly, Pro, Ser, Thr, or Val). This Arthroderma otae (strain ATCC MYA-4605 / CBS 113480) (Microsporum canis) protein is Methionine aminopeptidase 2-1.